Consider the following 162-residue polypeptide: MADPSFDIVSKVDAQEIDNAVNQTVKEIRTRFDFRDTGASATLSGESILLVANTDERVKAVLDVLQEKFVKRGISLKALTFDEPKPSGKEFRLPVTVQQGIAEDKAKAIAKKIRTDGPKGVQAQIQGDQLRVTGKKRDDLQRVIQILKTEDFEVPLQFVNYR.

It belongs to the YajQ family.

Its function is as follows. Nucleotide-binding protein. The sequence is that of Nucleotide-binding protein Francci3_0558 from Frankia casuarinae (strain DSM 45818 / CECT 9043 / HFP020203 / CcI3).